The sequence spans 882 residues: Valine--tRNA ligase (882 aa).

The short motif at 45–55 (PNVTGKLHLGH) is the 'HIGH' region element. Residues 519-523 (KMSKS) carry the 'KMSKS' region motif. Lysine 522 contributes to the ATP binding site. The stretch at 808–882 (LADLLNVEEE…RIAEMQKLVK (75 aa)) forms a coiled coil.

This sequence belongs to the class-I aminoacyl-tRNA synthetase family. ValS type 1 subfamily. Monomer.

It localises to the cytoplasm. The enzyme catalyses tRNA(Val) + L-valine + ATP = L-valyl-tRNA(Val) + AMP + diphosphate. In terms of biological role, catalyzes the attachment of valine to tRNA(Val). As ValRS can inadvertently accommodate and process structurally similar amino acids such as threonine, to avoid such errors, it has a 'posttransfer' editing activity that hydrolyzes mischarged Thr-tRNA(Val) in a tRNA-dependent manner. This Streptococcus pyogenes serotype M3 (strain ATCC BAA-595 / MGAS315) protein is Valine--tRNA ligase.